The following is a 290-amino-acid chain: Sodium/potassium-transporting ATPase subunit beta-2 (290 aa).

The Cytoplasmic segment spans residues 1-39 (MVIQKEKKSCGQVVEEWKEFVWNPRTHQFMGRTGTSWAF). A helical; Signal-anchor for type II membrane protein membrane pass occupies residues 40–67 (ILLFYLVFYGFLTAMFTLTMWVMLQTVS). At 68 to 290 (DHTPKYQDRL…VAFKLRINKT (223 aa)) the chain is on the extracellular side. Residues Asn-96 and Asn-118 are each glycosylated (N-linked (GlcNAc...) asparagine). Cys-129 and Cys-150 are oxidised to a cystine. N-linked (GlcNAc...) asparagine glycosylation is found at Asn-153 and Asn-159. A disulfide bridge connects residues Cys-160 and Cys-177. N-linked (GlcNAc...) asparagine glycans are attached at residues Asn-193, Asn-197, and Asn-238. The immunoglobulin-like stretch occupies residues 193–290 (NQSMNVTCAG…VAFKLRINKT (98 aa)). An intrachain disulfide couples Cys-200 to Cys-261.

It belongs to the X(+)/potassium ATPases subunit beta family. The sodium/potassium-transporting ATPase is composed of a catalytic alpha subunit, an auxiliary non-catalytic beta subunit and an additional regulatory subunit. Interacts with isoform 2 of BSG.

The protein resides in the cell membrane. Functionally, this is the non-catalytic component of the active enzyme, which catalyzes the hydrolysis of ATP coupled with the exchange of Na(+) and K(+) ions across the plasma membrane. The exact function of the beta-2 subunit is not known. Its function is as follows. Mediates cell adhesion of neurons and astrocytes, and promotes neurite outgrowth. The polypeptide is Sodium/potassium-transporting ATPase subunit beta-2 (ATP1B2) (Homo sapiens (Human)).